Consider the following 91-residue polypeptide: MTCGQVQGNLAQCIGFLQKGGVVPPSCCTGVKNILNSSRTTADRRAVCSCLKAAAGAVRGINPNNAEALPGKCGVNIPYKISTSTNCNSIN.

4 cysteine pairs are disulfide-bonded: C3–C50, C13–C27, C28–C73, and C48–C87. The a 1,2-diacyl-sn-glycero-3-phosphocholine site is built by R44 and Y79.

In terms of assembly, monomer.

In terms of biological role, plant non-specific lipid-transfer proteins transfer phospholipids as well as galactolipids across membranes. May play a role in wax or cutin deposition in the cell walls of expanding epidermal cells and certain secretory tissues. Has antifungal activity against F.solani, F.oxysporum, P.aphanidermatum and S.rolfsii. Has antibacterial activity against the Gram-positive bacterium S.aureus but not against the Gram-negative bacterium S.typhimurium. In Vigna radiata var. radiata (Mung bean), this protein is Non-specific lipid-transfer protein 1.